Reading from the N-terminus, the 238-residue chain is Ribitol-5-phosphate cytidylyltransferase 1 (238 aa).

Residues 7 to 10 (LAGG) and 81 to 87 (GSDRNDT) contribute to the CTP site.

The protein belongs to the IspD/TarI cytidylyltransferase family. TarI subfamily.

It carries out the reaction D-ribitol 5-phosphate + CTP + H(+) = CDP-L-ribitol + diphosphate. It functions in the pathway cell wall biogenesis; poly(ribitol phosphate) teichoic acid biosynthesis. In terms of biological role, catalyzes the transfer of the cytidylyl group of CTP to D-ribitol 5-phosphate. The sequence is that of Ribitol-5-phosphate cytidylyltransferase 1 from Staphylococcus aureus (strain bovine RF122 / ET3-1).